A 126-amino-acid polypeptide reads, in one-letter code: RutC family protein SSO3206 (126 aa).

This sequence belongs to the RutC family.

The protein is RutC family protein SSO3206 of Saccharolobus solfataricus (strain ATCC 35092 / DSM 1617 / JCM 11322 / P2) (Sulfolobus solfataricus).